A 358-amino-acid chain; its full sequence is Naringenin,2-oxoglutarate 3-dioxygenase (358 aa).

The Fe2OG dioxygenase domain maps to 190–294 (CVDMDQKIVV…RLSIATFQNP (105 aa)). Residues His217, Asp219, and His275 each coordinate Fe cation. Residue Arg285 coordinates 2-oxoglutarate.

It belongs to the iron/ascorbate-dependent oxidoreductase family. As to quaternary structure, interacts with Dihydroflavonol-4-reductase (TT3), chalcone synthase (TT4) and chalcone isomerase (TT5) to form a flavonoid enzyme complex. Fe(2+) is required as a cofactor. It depends on L-ascorbate as a cofactor.

The enzyme catalyses a (2S)-flavan-4-one + 2-oxoglutarate + O2 = a (2R,3R)-dihydroflavonol + succinate + CO2. Its pathway is secondary metabolite biosynthesis; flavonoid biosynthesis. Its function is as follows. Catalyzes the 3-beta-hydroxylation of 2S-flavanones to 2R,3R-dihydroflavonols which are intermediates in the biosynthesis of flavonols, anthocyanidins, catechins and proanthocyanidins in plants. The polypeptide is Naringenin,2-oxoglutarate 3-dioxygenase (F3H) (Arabidopsis thaliana (Mouse-ear cress)).